The chain runs to 151 residues: Large ribosomal subunit protein eL19 (151 aa).

The tract at residues 62 to 93 (RLKERRKKRSLKSEGKKSGSRKGKKGARANSK) is disordered. Positions 79–88 (SGSRKGKKGA) are enriched in basic residues.

The protein belongs to the eukaryotic ribosomal protein eL19 family. As to quaternary structure, part of the 50S ribosomal subunit.

Functionally, binds to the 23S rRNA. This Saccharolobus solfataricus (strain ATCC 35092 / DSM 1617 / JCM 11322 / P2) (Sulfolobus solfataricus) protein is Large ribosomal subunit protein eL19.